Consider the following 426-residue polypeptide: Enolase (426 aa).

A disordered region spans residues 38–60 (PSGASTGAHEAVEKRDGDKSRYG). Positions 47 to 58 (EAVEKRDGDKSR) are enriched in basic and acidic residues. (2R)-2-phosphoglycerate is bound at residue Q163. The Proton donor role is filled by E205. The Mg(2+) site is built by D242, E285, and D312. Residues K337, R366, S367, and K388 each contribute to the (2R)-2-phosphoglycerate site. The Proton acceptor role is filled by K337.

It belongs to the enolase family. Mg(2+) serves as cofactor.

It is found in the cytoplasm. The protein localises to the secreted. The protein resides in the cell surface. The enzyme catalyses (2R)-2-phosphoglycerate = phosphoenolpyruvate + H2O. It functions in the pathway carbohydrate degradation; glycolysis; pyruvate from D-glyceraldehyde 3-phosphate: step 4/5. Functionally, catalyzes the reversible conversion of 2-phosphoglycerate (2-PG) into phosphoenolpyruvate (PEP). It is essential for the degradation of carbohydrates via glycolysis. This Caulobacter sp. (strain K31) protein is Enolase.